The chain runs to 391 residues: Protein-glutamate methylesterase/protein-glutamine glutaminase (391 aa).

The 118-residue stretch at 4–121 (KVLVVDDSSF…ARNNEDAIKL (118 aa)) folds into the Response regulatory domain. Residue aspartate 55 is modified to 4-aspartylphosphate. The region spanning 197–391 (SGKHYQLVAI…IRLKTEVGCG (195 aa)) is the CheB-type methylesterase domain. Catalysis depends on residues serine 209, histidine 236, and aspartate 333.

It belongs to the CheB family. Phosphorylated by CheA. Phosphorylation of the N-terminal regulatory domain activates the methylesterase activity.

It localises to the cytoplasm. It carries out the reaction [protein]-L-glutamate 5-O-methyl ester + H2O = L-glutamyl-[protein] + methanol + H(+). The catalysed reaction is L-glutaminyl-[protein] + H2O = L-glutamyl-[protein] + NH4(+). Functionally, involved in chemotaxis. Part of a chemotaxis signal transduction system that modulates chemotaxis in response to various stimuli. Catalyzes the demethylation of specific methylglutamate residues introduced into the chemoreceptors (methyl-accepting chemotaxis proteins or MCP) by CheR. Also mediates the irreversible deamidation of specific glutamine residues to glutamic acid. The sequence is that of Protein-glutamate methylesterase/protein-glutamine glutaminase from Pseudoalteromonas translucida (strain TAC 125).